Here is a 429-residue protein sequence, read N- to C-terminus: Saccharopine dehydrogenase-like oxidoreductase (429 aa).

The residue at position 2 (A2) is an N-acetylalanine. Position 217 is a phosphoserine (S217).

This sequence belongs to the saccharopine dehydrogenase family.

This chain is Saccharopine dehydrogenase-like oxidoreductase (SCCPDH), found in Pongo abelii (Sumatran orangutan).